Here is a 101-residue protein sequence, read N- to C-terminus: Apolipoprotein C-II (101 aa).

An N-terminal signal peptide occupies residues 1 to 22; the sequence is MGTRFLLALFLVLLVLGFEVQG. Residues 66–74 form a lipid binding region; that stretch reads TVDEKLRDM. Residues 78-101 are lipoprotein lipase cofactor; it reads STAAMSTYAGILTDQVLSMLKGEE.

The protein belongs to the apolipoprotein C2 family. Post-translationally, proapolipoprotein C-II is synthesized as a sialic acid containing glycoprotein which is subsequently desialylated prior to its proteolytic processing. Proapolipoprotein C-II, the major form found in plasma undergoes proteolytic cleavage of its N-terminal hexapeptide to generate apolipoprotein C-II, which occurs as the minor form in plasma.

Its subcellular location is the secreted. Its function is as follows. Component of chylomicrons, very low-density lipoproteins (VLDL), low-density lipoproteins (LDL), and high-density lipoproteins (HDL) in plasma. Plays an important role in lipoprotein metabolism as an activator of lipoprotein lipase. Both proapolipoprotein C-II and apolipoprotein C-II can activate lipoprotein lipase. The chain is Apolipoprotein C-II (APOC2) from Aotus nancymaae (Ma's night monkey).